The following is a 343-amino-acid chain: Cell cycle control protein 50C (343 aa).

Topologically, residues 1–34 (MKRKCQDYESRLPDNTAVKQQQLPAFRLQLTASE) are cytoplasmic. Residues 35–55 (ILSGFFAIGLFCLGMGIILLL) traverse the membrane as a helical segment. The Extracellular portion of the chain corresponds to 56 to 306 (SAKSIKEVEI…STLTWSGGSS (251 aa)). N-linked (GlcNAc...) asparagine glycosylation is found at Asn-66, Asn-164, Asn-205, and Asn-265. A helical membrane pass occupies residues 307–327 (LFLALAYLVTGAVTLLASFSM). Over 328-343 (MALHLKLKERKTFFLQ) the chain is Cytoplasmic.

Belongs to the CDC50/LEM3 family.

Its subcellular location is the membrane. The chain is Cell cycle control protein 50C (TMEM30C) from Bos taurus (Bovine).